The following is a 407-amino-acid chain: Protein RecA (407 aa).

79-86 (GPESSGKT) serves as a coordination point for ATP. The tract at residues 358–407 (LSLEASPEESDAKTLRRXASRGAGASSSRVQEGSAANDHFQDESTTAKLL) is disordered. Residues 377–386 (SRGAGASSSR) are compositionally biased toward low complexity.

Belongs to the RecA family.

It localises to the cytoplasm. Functionally, can catalyze the hydrolysis of ATP in the presence of single-stranded DNA, the ATP-dependent uptake of single-stranded DNA by duplex DNA, and the ATP-dependent hybridization of homologous single-stranded DNAs. It interacts with LexA causing its activation and leading to its autocatalytic cleavage. The polypeptide is Protein RecA (Treponema pallidum (strain Nichols)).